Reading from the N-terminus, the 405-residue chain is L-cysteine:1D-myo-inositol 2-amino-2-deoxy-alpha-D-glucopyranoside ligase (405 aa).

Zn(2+) is bound at residue cysteine 43. L-cysteinyl-5'-AMP-binding positions include 43 to 46, threonine 58, and 81 to 83; these read CGIT and NIT. A 'HIGH' region motif is present at residues 45–55; sequence ITPYDATHLGH. The 'ERGGDP' region signature appears at 187–192; it reads ERGGDP. Tryptophan 227 serves as a coordination point for L-cysteinyl-5'-AMP. Cysteine 231 provides a ligand contact to Zn(2+). 249 to 251 is an L-cysteinyl-5'-AMP binding site; that stretch reads GSD. Histidine 256 contacts Zn(2+). Isoleucine 283 contacts L-cysteinyl-5'-AMP. Positions 289–293 match the 'KMSKS' region motif; the sequence is KMSKS.

Belongs to the class-I aminoacyl-tRNA synthetase family. MshC subfamily. As to quaternary structure, monomer. Requires Zn(2+) as cofactor.

The enzyme catalyses 1D-myo-inositol 2-amino-2-deoxy-alpha-D-glucopyranoside + L-cysteine + ATP = 1D-myo-inositol 2-(L-cysteinylamino)-2-deoxy-alpha-D-glucopyranoside + AMP + diphosphate + H(+). Functionally, catalyzes the ATP-dependent condensation of GlcN-Ins and L-cysteine to form L-Cys-GlcN-Ins. This is L-cysteine:1D-myo-inositol 2-amino-2-deoxy-alpha-D-glucopyranoside ligase from Nakamurella multipartita (strain ATCC 700099 / DSM 44233 / CIP 104796 / JCM 9543 / NBRC 105858 / Y-104) (Microsphaera multipartita).